The following is an 86-amino-acid chain: Small ribosomal subunit protein bS20 (86 aa).

The interval 1–27 (MANNKSAKKRAIQAEKRRQHNASRRSM) is disordered.

It belongs to the bacterial ribosomal protein bS20 family.

In terms of biological role, binds directly to 16S ribosomal RNA. In Vibrio vulnificus (strain CMCP6), this protein is Small ribosomal subunit protein bS20.